We begin with the raw amino-acid sequence, 107 residues long: CRISPR-associated endoribonuclease Cas2 (107 aa).

Aspartate 6 lines the Mg(2+) pocket.

This sequence belongs to the CRISPR-associated endoribonuclease Cas2 protein family. Homodimer, forms a heterotetramer with a Cas1 homodimer. Requires Mg(2+) as cofactor.

CRISPR (clustered regularly interspaced short palindromic repeat), is an adaptive immune system that provides protection against mobile genetic elements (viruses, transposable elements and conjugative plasmids). CRISPR clusters contain sequences complementary to antecedent mobile elements and target invading nucleic acids. CRISPR clusters are transcribed and processed into CRISPR RNA (crRNA). Functions as a ssRNA-specific endoribonuclease. Involved in the integration of spacer DNA into the CRISPR cassette. The chain is CRISPR-associated endoribonuclease Cas2 from Streptococcus mutans serotype c (strain NN2025).